Reading from the N-terminus, the 467-residue chain is ATP-dependent rRNA helicase rrp3 (467 aa).

Positions 1–48 (MPGVKKRKVAREAPAPAPAQESDVESSTPEQTQEPEAQEQEQEEGQSK) are disordered. Positions 48–76 (KTFKELGIIEQLCEACETMGYKAPTPIQR) match the Q motif motif. The 172-residue stretch at 79–250 (IPLALKGRDL…RASLSNPLRV (172 aa)) folds into the Helicase ATP-binding domain. 92 to 99 (AETGSGKT) serves as a coordination point for ATP. A DEAD box motif is present at residues 198 to 201 (DEAD). Positions 262 to 422 (TLLQSYLFIP…EYDCPKDEVM (161 aa)) constitute a Helicase C-terminal domain. Residues 439–467 (MKDYNEKKGSRGKKFGGKRSRDEMDQEEG) are disordered.

The protein belongs to the DEAD box helicase family. DDX47/RRP3 subfamily. Interacts with the SSU processome.

Its subcellular location is the nucleus. The catalysed reaction is ATP + H2O = ADP + phosphate + H(+). Functionally, ATP-dependent rRNA helicase required for pre-ribosomal RNA processing. Involved in the maturation of the 35S-pre-rRNA and to its cleavage to mature 18S rRNA. The chain is ATP-dependent rRNA helicase rrp3 from Aspergillus niger (strain ATCC MYA-4892 / CBS 513.88 / FGSC A1513).